We begin with the raw amino-acid sequence, 112 residues long: Omega-agatoxin-1A (112 aa).

The N-terminal stretch at 1–19 is a signal peptide; that stretch reads MMKFVVFLACLFVAAHSFA. Residues 20-36 constitute a propeptide that is removed on maturation; sequence VEGEEEYFEAEVPELER. A propeptide spans 103 to 109 (glu-rich); sequence RSEESER.

Belongs to the neurotoxin 04 (omega-agtx) family. 01 (type I omega-agtx) subfamily. As to quaternary structure, heterodimer of two subunits, a major chain and a minor chain, linked by a disulfide bond. Proteolytically processed to yield the major and the minor chains. In terms of tissue distribution, expressed by the venom gland.

Its subcellular location is the secreted. In terms of biological role, omega-agatoxins are antagonists of voltage-gated calcium channels. They block insect neuromuscular transmission presynaptically. This toxin is a blocker of L-type calcium channels (Cav/CACNA1). The polypeptide is Omega-agatoxin-1A (Agelenopsis aperta (North American funnel-web spider)).